An 828-amino-acid polypeptide reads, in one-letter code: MTEAIINEGSPLGYSQGYSEDIDAIRQREYPMLSDTTYLDHAGTTLYAKSLIDSFSRDLTTNLFGNPHSLSASSQRTTQRVDDIRLRALRFFNADPEHFDLVFVANATSAIKLVADALRDSAHGFWYGYHVDAHTSLVGARELAQAGSRCFTTDEEVEAWIAQLDADRTGAAQLFAFPAQSNMNGRRLPLRWCGRIRDRTKETATTYTLLDAASLVATSPLDLSDVSAASDFTVLSFYKIFGFPDLGALIVRKSAGHIFAQRRFFGGGTVDMVLTQDTQWHAKKRSVHEILEDGTLPFHNIIALDSALDTHARLYGSMGNVSTHTRFLARTLYDRLAALRHFNGERVVHFYMGRSPDFADASAQGPILAFNLRSSQGGWIGKSEVERLASVKSLQIRSGTLCNPGGTASQLGWSGADMLRHFSAGLRCGDDHDVMDGRPTGILRVSLGAMSNLRDVEAFVAFVEEFYVEKTPNVCSVVPSAADDSLQAGFYVESLAVYPIKSCGAFKVPDGQRWEIRREGLAWDREWCLVHQGTGAALNQKRYPRMALIRPHIDLARGVLRVVCGEASSEQKTLEISLRREDASLVTTSLCQNAAKPSTVCGDQVVVQVYSSTAVSSFFSTFLDVPCTLARFPPQSTTRYTRRSLHSRSSTAALRRQRPVEESSMPGSFPSDTPLSRTPEPPPILLANESPILLISRSSVNRLNETIKASAKKAVAADVFRANIVVAENLPHQLANTERPYIEDRWESFTVGPDRLQFDVLGSCQRCQMVCIDQCSGERRDEPFSTLAKTRKVGSQIVFGRHAAVADGVDGISRTVMVGDVVRPWYPE.

N6-(pyridoxal phosphate)lysine is present on Lys239. The active site involves Cys402. The segment at 638–682 is disordered; it reads TRYTRRSLHSRSSTAALRRQRPVEESSMPGSFPSDTPLSRTPEPP. Positions 652-825 constitute an MOSC domain; that stretch reads AALRRQRPVE…VMVGDVVRPW (174 aa).

This sequence belongs to the class-V pyridoxal-phosphate-dependent aminotransferase family. MOCOS subfamily. Pyridoxal 5'-phosphate serves as cofactor.

The enzyme catalyses Mo-molybdopterin + L-cysteine + AH2 = thio-Mo-molybdopterin + L-alanine + A + H2O. Functionally, sulfurates the molybdenum cofactor. Sulfation of molybdenum is essential for xanthine dehydrogenase (XDH) and aldehyde oxidase (ADO) enzymes in which molybdenum cofactor is liganded by 1 oxygen and 1 sulfur atom in active form. The protein is Molybdenum cofactor sulfurase of Aspergillus terreus (strain NIH 2624 / FGSC A1156).